The primary structure comprises 416 residues: Glutamyl-tRNA reductase (416 aa).

Residues Thr-49–Arg-52, Ser-105, Glu-110–Gln-112, and Gln-116 each bind substrate. The Nucleophile role is filled by Cys-50. Gly-185–Ile-190 is an NADP(+) binding site.

Belongs to the glutamyl-tRNA reductase family. In terms of assembly, homodimer.

The catalysed reaction is (S)-4-amino-5-oxopentanoate + tRNA(Glu) + NADP(+) = L-glutamyl-tRNA(Glu) + NADPH + H(+). Its pathway is porphyrin-containing compound metabolism; protoporphyrin-IX biosynthesis; 5-aminolevulinate from L-glutamyl-tRNA(Glu): step 1/2. Its function is as follows. Catalyzes the NADPH-dependent reduction of glutamyl-tRNA(Glu) to glutamate 1-semialdehyde (GSA). In Shewanella putrefaciens (strain CN-32 / ATCC BAA-453), this protein is Glutamyl-tRNA reductase.